We begin with the raw amino-acid sequence, 1026 residues long: MSSFDIFSPTASVSGKFFLEASAGTGKTFTIEQVVLRSLLEGSIEQTKNILVVTFTNAATNELKLRIQASLKQALSLFSQALSHPGTPLPPYISSSETKVKQLYMKIRNSLATLDEMNIFTIHGFCRFTLEQHFPWIQPIQPSSIFSEPQTIQQHILDYLRKNLWDTVLSPKQYAFLSYHHRATTQQTRHLIERLLQDYTSTPNLALSPLSITLQKLKAWVSRYQHLAPLSLEEMQAFSLRFKQSDLSIERELPAFVQQFETNPYSLDMLFFPGMVQKFQEENRNKKKLSAPASPLDPFFQDWIQLAHPFCQKEPIFHTLLKSVQQHLKTHCAQSYSHDESIATLESLLAHNDTVVSQLRKQFQLVLIDEFQDTDKRQWQIFSKLFASPDYSGSLFLIGDPKQSIYEWRNADLPTYLQAKHSFPKEAQLILDTNYRSTPELMQALNHLFSLPTPFLETPQNILYHPLHSKGSAEISYSEFSPIHFFSSEDIQEETLWISKTASYLRSAYSIPFGNMAVLVQDYPQALKLITHSTIPMAYCKEKRIFDRTESPYLLILLLEALLYPENQQKIQAILMSRLFQLSSTEIHQHLKTFSSLFFTLNRHLYHYSLLATFYKLMGENVLSQTIGETLLQTPLGDIIFQELEALCLYLDKTTENPHHKLLHLINILITGKYDEELSFSSQSNDENMIKITTVHSSKGLEYDVVFCSCLNKAKEKTPSVHMREMYVACTRAKKFLFIPFSPIEKRSLSTKKLSALANYANVTKHHSVPHLVETLTSSSPELFSSSFQPPESSLTPDRERLPQQTYFSLPHLPSRTIHSFSSTVENLHFSEPIQELSPSLLFPGGSLTGTLIHKLLESLAGNFAACFEEIFNKAQTLLKNTPLEGYESIIAEKICTVFSTTLPFSSGSFALRNVHPHNIRAEETFLLQEEGELWQGIVDLFFEHKDRFFIIDWKTSFLGDETSCYSPDQLHLYIQRQGLDRQERLYRKAAKRFLHQFNSLLQVEMAFVFIRGLDDKGNGFLQPGR.

The region spanning 1–438 (MSSFDIFSPT…LILDTNYRST (438 aa)) is the UvrD-like helicase ATP-binding domain. The DNA-binding and helicase activity, interacts with RecC stretch occupies residues 1–766 (MSSFDIFSPT…LANYANVTKH (766 aa)). 21–28 (ASAGTGKT) contacts ATP. Positions 815–1026 (SRTIHSFSST…KGNGFLQPGR (212 aa)) are nuclease activity, interacts with RecD and RecA. Residues His854, Asp940, and Asp953 each contribute to the Mg(2+) site. The For nuclease activity role is filled by Asp953.

It belongs to the helicase family. UvrD subfamily. As to quaternary structure, heterotrimer of RecB, RecC and RecD. All subunits contribute to DNA-binding. Interacts with RecA. The cofactor is Mg(2+).

It carries out the reaction Exonucleolytic cleavage (in the presence of ATP) in either 5'- to 3'- or 3'- to 5'-direction to yield 5'-phosphooligonucleotides.. The enzyme catalyses Couples ATP hydrolysis with the unwinding of duplex DNA by translocating in the 3'-5' direction.. The catalysed reaction is ATP + H2O = ADP + phosphate + H(+). In terms of biological role, a helicase/nuclease that prepares dsDNA breaks (DSB) for recombinational DNA repair. Binds to DSBs and unwinds DNA via a highly rapid and processive ATP-dependent bidirectional helicase activity. Unwinds dsDNA until it encounters a Chi (crossover hotspot instigator) sequence from the 3' direction. Cuts ssDNA a few nucleotides 3' to the Chi site. The properties and activities of the enzyme are changed at Chi. The Chi-altered holoenzyme produces a long 3'-ssDNA overhang and facilitates RecA-binding to the ssDNA for homologous DNA recombination and repair. Holoenzyme degrades any linearized DNA that is unable to undergo homologous recombination. In the holoenzyme this subunit contributes ATPase, 3'-5' helicase, exonuclease activity and loads RecA onto ssDNA. The sequence is that of RecBCD enzyme subunit RecB from Chlamydia trachomatis serovar D (strain ATCC VR-885 / DSM 19411 / UW-3/Cx).